Reading from the N-terminus, the 437-residue chain is Ribosomal protein uS12 methylthiotransferase RimO (437 aa).

Residues P4–P114 enclose the MTTase N-terminal domain. 6 residues coordinate [4Fe-4S] cluster: C13, C49, C78, C145, C149, and C152. A Radical SAM core domain is found at L131–A368. The 67-residue stretch at R371 to D437 folds into the TRAM domain.

This sequence belongs to the methylthiotransferase family. RimO subfamily. [4Fe-4S] cluster serves as cofactor.

It is found in the cytoplasm. The enzyme catalyses L-aspartate(89)-[ribosomal protein uS12]-hydrogen + (sulfur carrier)-SH + AH2 + 2 S-adenosyl-L-methionine = 3-methylsulfanyl-L-aspartate(89)-[ribosomal protein uS12]-hydrogen + (sulfur carrier)-H + 5'-deoxyadenosine + L-methionine + A + S-adenosyl-L-homocysteine + 2 H(+). Functionally, catalyzes the methylthiolation of an aspartic acid residue of ribosomal protein uS12. The chain is Ribosomal protein uS12 methylthiotransferase RimO from Methylococcus capsulatus (strain ATCC 33009 / NCIMB 11132 / Bath).